Consider the following 283-residue polypeptide: Phosphatidylglycerol--prolipoprotein diacylglyceryl transferase (283 aa).

A run of 3 helical transmembrane segments spans residues 17-37, 56-76, and 88-108; these read LAVRWYALSYILGFILFTFLG, FLTWGILGVILGGRLGYVLFY, and IFKVWEGGMSFHGGFLGVVIA. Position 139 (R139) interacts with a 1,2-diacyl-sn-glycero-3-phospho-(1'-sn-glycerol). A run of 2 helical transmembrane segments spans residues 222–242 and 255–275; these read GQVASLFLGGYGIFRFIAEFA and GLSMGQWLSVPMIVLGIVGFV.

It belongs to the Lgt family.

It is found in the cell inner membrane. The enzyme catalyses L-cysteinyl-[prolipoprotein] + a 1,2-diacyl-sn-glycero-3-phospho-(1'-sn-glycerol) = an S-1,2-diacyl-sn-glyceryl-L-cysteinyl-[prolipoprotein] + sn-glycerol 1-phosphate + H(+). It participates in protein modification; lipoprotein biosynthesis (diacylglyceryl transfer). Functionally, catalyzes the transfer of the diacylglyceryl group from phosphatidylglycerol to the sulfhydryl group of the N-terminal cysteine of a prolipoprotein, the first step in the formation of mature lipoproteins. This Neisseria meningitidis serogroup B (strain ATCC BAA-335 / MC58) protein is Phosphatidylglycerol--prolipoprotein diacylglyceryl transferase.